The primary structure comprises 63 residues: Large ribosomal subunit protein bL28 (63 aa).

It belongs to the bacterial ribosomal protein bL28 family.

This is Large ribosomal subunit protein bL28 from Citrifermentans bemidjiense (strain ATCC BAA-1014 / DSM 16622 / JCM 12645 / Bem) (Geobacter bemidjiensis).